Reading from the N-terminus, the 102-residue chain is Co-chaperonin GroES (102 aa).

This sequence belongs to the GroES chaperonin family. Heptamer of 7 subunits arranged in a ring. Interacts with the chaperonin GroEL.

The protein resides in the cytoplasm. In terms of biological role, together with the chaperonin GroEL, plays an essential role in assisting protein folding. The GroEL-GroES system forms a nano-cage that allows encapsulation of the non-native substrate proteins and provides a physical environment optimized to promote and accelerate protein folding. GroES binds to the apical surface of the GroEL ring, thereby capping the opening of the GroEL channel. The protein is Co-chaperonin GroES of Streptomyces coelicolor (strain ATCC BAA-471 / A3(2) / M145).